A 778-amino-acid polypeptide reads, in one-letter code: ATP synthase subunit beta (778 aa).

The segment at 1-289 (MKENNKTIEA…IDIYEENEDL (289 aa)) is unknown. The interval 290-778 (MKLNTLKSDK…KPLNSENKSN (489 aa)) is ATP synthase subunit beta. An ATP-binding site is contributed by 447–454 (GGAGVGKT).

It belongs to the ATPase alpha/beta chains family. In terms of assembly, F-type ATPases have 2 components, CF(1) - the catalytic core - and CF(0) - the membrane proton channel. CF(1) has five subunits: alpha(3), beta(3), gamma(1), delta(1), epsilon(1). CF(0) has three main subunits: a(1), b(2) and c(9-12). The alpha and beta chains form an alternating ring which encloses part of the gamma chain. CF(1) is attached to CF(0) by a central stalk formed by the gamma and epsilon chains, while a peripheral stalk is formed by the delta and b chains.

The protein resides in the cell membrane. It carries out the reaction ATP + H2O + 4 H(+)(in) = ADP + phosphate + 5 H(+)(out). In terms of biological role, produces ATP from ADP in the presence of a proton gradient across the membrane. The catalytic sites are hosted primarily by the beta subunits. This chain is ATP synthase subunit beta (atpD), found in Malacoplasma penetrans (strain HF-2) (Mycoplasma penetrans).